Reading from the N-terminus, the 85-residue chain is Depressant insect toxin BmK ITa1 (85 aa).

An N-terminal signal peptide occupies residues 1-21 (MKLFLLLLISASMLIDGLVNA). Positions 22 to 82 (DGYIRGSNGC…TWKSESNTCG (61 aa)) constitute an LCN-type CS-alpha/beta domain. 4 cysteine pairs are disulfide-bonded: Cys31/Cys81, Cys35/Cys56, Cys42/Cys63, and Cys46/Cys65. Gly82 is subject to Glycine amide.

The protein belongs to the long (4 C-C) scorpion toxin superfamily. Sodium channel inhibitor family. Beta subfamily. In terms of tissue distribution, expressed by the venom gland.

The protein resides in the secreted. Functionally, depressant insect toxins cause a transient contraction paralysis followed by a slow flaccid paralysis. They bind voltage-independently to sodium channels (Nav) and block action potentials, primarily by depolarizing the axonal membrane and suppressing the sodium current. This chain is Depressant insect toxin BmK ITa1, found in Olivierus martensii (Manchurian scorpion).